The following is a 226-amino-acid chain: Endonuclease NucS (226 aa).

The protein belongs to the NucS endonuclease family.

It is found in the cytoplasm. Cleaves both 3' and 5' ssDNA extremities of branched DNA structures. The sequence is that of Endonuclease NucS from Mycobacterium tuberculosis (strain ATCC 25618 / H37Rv).